We begin with the raw amino-acid sequence, 209 residues long: Large ribosomal subunit protein bL9 (209 aa).

The segment at 184–209 (SAASEDSDLVETPEDRATEEAEDEQP) is disordered.

The protein belongs to the bacterial ribosomal protein bL9 family.

Functionally, binds to the 23S rRNA. This is Large ribosomal subunit protein bL9 from Dinoroseobacter shibae (strain DSM 16493 / NCIMB 14021 / DFL 12).